Here is a 67-residue protein sequence, read N- to C-terminus: Kappa-conotoxin-like 2 (67 aa).

A signal peptide spans 1–26 (MMFRLTSVSCFLLVIACLNLFQVVLT). 4 disulfide bridges follow: C29–C43, C36–C48, C42–C51, and C47–C55. F59 is modified (phenylalanine amide). The propeptide occupies 63 to 67 (ATFQE).

This sequence belongs to the conotoxin I2 superfamily. As to expression, expressed by the venom duct.

It localises to the secreted. In terms of biological role, inhibits the vertebrate voltage-gated potassium channels Kv1.1/KCNA1 and Kv1.3/KCNA3. This chain is Kappa-conotoxin-like 2, found in Conus vexillum (Flag cone).